Here is a 131-residue protein sequence, read N- to C-terminus: Translation initiation factor 5A (131 aa).

At Lys37 the chain carries Hypusine.

It belongs to the eIF-5A family.

The protein resides in the cytoplasm. Functions by promoting the formation of the first peptide bond. This is Translation initiation factor 5A (eIF5A) from Methanococcus maripaludis (strain C5 / ATCC BAA-1333).